The sequence spans 255 residues: 5-oxoprolinase subunit A 2 (255 aa).

The protein belongs to the LamB/PxpA family. Forms a complex composed of PxpA, PxpB and PxpC.

It carries out the reaction 5-oxo-L-proline + ATP + 2 H2O = L-glutamate + ADP + phosphate + H(+). Catalyzes the cleavage of 5-oxoproline to form L-glutamate coupled to the hydrolysis of ATP to ADP and inorganic phosphate. The chain is 5-oxoprolinase subunit A 2 from Agrobacterium fabrum (strain C58 / ATCC 33970) (Agrobacterium tumefaciens (strain C58)).